A 298-amino-acid polypeptide reads, in one-letter code: Diphthine methyl ester synthase (298 aa).

Residues leucine 9, aspartate 85, glycine 88, 113–114 (SV), leucine 164, leucine 222, and histidine 247 each bind S-adenosyl-L-methionine.

Belongs to the diphthine synthase family.

It localises to the cytoplasm. The enzyme catalyses 2-[(3S)-amino-3-carboxypropyl]-L-histidyl-[translation elongation factor 2] + 4 S-adenosyl-L-methionine = diphthine methyl ester-[translation elongation factor 2] + 4 S-adenosyl-L-homocysteine + 3 H(+). The protein operates within protein modification; peptidyl-diphthamide biosynthesis. S-adenosyl-L-methionine-dependent methyltransferase that catalyzes four methylations of the modified target histidine residue in translation elongation factor 2 (EF-2), to form an intermediate called diphthine methyl ester. The four successive methylation reactions represent the second step of diphthamide biosynthesis. The protein is Diphthine methyl ester synthase (DPH5) of Eremothecium gossypii (strain ATCC 10895 / CBS 109.51 / FGSC 9923 / NRRL Y-1056) (Yeast).